A 181-amino-acid polypeptide reads, in one-letter code: Crossover junction endodeoxyribonuclease RuvC (181 aa).

Catalysis depends on residues aspartate 7, glutamate 67, and aspartate 139. Positions 7, 67, and 139 each coordinate Mg(2+).

It belongs to the RuvC family. Homodimer which binds Holliday junction (HJ) DNA. The HJ becomes 2-fold symmetrical on binding to RuvC with unstacked arms; it has a different conformation from HJ DNA in complex with RuvA. In the full resolvosome a probable DNA-RuvA(4)-RuvB(12)-RuvC(2) complex forms which resolves the HJ. Mg(2+) is required as a cofactor.

It localises to the cytoplasm. It carries out the reaction Endonucleolytic cleavage at a junction such as a reciprocal single-stranded crossover between two homologous DNA duplexes (Holliday junction).. Functionally, the RuvA-RuvB-RuvC complex processes Holliday junction (HJ) DNA during genetic recombination and DNA repair. Endonuclease that resolves HJ intermediates. Cleaves cruciform DNA by making single-stranded nicks across the HJ at symmetrical positions within the homologous arms, yielding a 5'-phosphate and a 3'-hydroxyl group; requires a central core of homology in the junction. The consensus cleavage sequence is 5'-(A/T)TT(C/G)-3'. Cleavage occurs on the 3'-side of the TT dinucleotide at the point of strand exchange. HJ branch migration catalyzed by RuvA-RuvB allows RuvC to scan DNA until it finds its consensus sequence, where it cleaves and resolves the cruciform DNA. The polypeptide is Crossover junction endodeoxyribonuclease RuvC (Ralstonia pickettii (strain 12J)).